Reading from the N-terminus, the 124-residue chain is U-scoloptoxin-Er5d (124 aa).

The signal sequence occupies residues 1–22 (MKTNCEFPLLCLLIVLVANVEG). Positions 23–94 (EVEDNELKMV…KRLWRNWERR (72 aa)) are excised as a propeptide. 3 RLWRNWE repeats span residues 34 to 40 (RLWRNWE), 61 to 67 (RLWRNWE), and 86 to 92 (RLWRNWE). Glutamine 95 carries the pyrrolidone carboxylic acid modification. An RLWRNWE 4; approximate repeat occupies 107 to 113 (ELWRNWE). The propeptide occupies 112–124 (WEDLKRRQVGRFE).

This sequence belongs to the scoloptoxin-08 family. In terms of tissue distribution, expressed by the venom gland.

It localises to the secreted. The protein is U-scoloptoxin-Er5d of Ethmostigmus rubripes (Giant centipede).